The sequence spans 1042 residues: MKQSPALAPEERCRRAGSPKPVLRADDNNMGNGCSQKLATANLLRFLLLVLIPCICALVLLLVILLSYVGTLQKVYFKSNGSEPLVTDGEIQGSDVILTNTIYNQSTVVSTAHPDQHVPAWTTDASLPGDQSHRNTSACMNITHSQCQMLPYHATLTPLLSVVRNMEMEKFLKFFTYLHRLSCYQHIMLFGCTLAFPECIIDGDDSHGLLPCRSFCEAAKEGCESVLGMVNYSWPDFLRCSQFRNQTESSNVSRICFSPQQENGKQLLCGRGENFLCASGICIPGKLQCNGYNDCDDWSDEAHCNCSENLFHCHTGKCLNYSLVCDGYDDCGDLSDEQNCDCNPTTEHRCGDGRCIAMEWVCDGDHDCVDKSDEVNCSCHSQGLVECRNGQCIPSTFQCDGDEDCKDGSDEENCSVIQTSCQEGDQRCLYNPCLDSCGGSSLCDPNNSLNNCSQCEPITLELCMNLPYNSTSYPNYFGHRTQKEASISWESSLFPALVQTNCYKYLMFFSCTILVPKCDVNTGEHIPPCRALCEHSKERCESVLGIVGLQWPEDTDCSQFPEENSDNQTCLMPDEYVEECSPSHFKCRSGQCVLASRRCDGQADCDDDSDEENCGCKERDLWECPSNKQCLKHTVICDGFPDCPDYMDEKNCSFCQDDELECANHACVSRDLWCDGEADCSDSSDEWDCVTLSINVNSSSFLMVHRAATEHHVCADGWQEILSQLACKQMGLGEPSVTKLIQEQEKEPRWLTLHSNWESLNGTTLHELLVNGQSCESRSKISLLCTKQDCGRRPAARMNKRILGGRTSRPGRWPWQCSLQSEPSGHICGCVLIAKKWVLTVAHCFEGRENAAVWKVVLGINNLDHPSVFMQTRFVKTIILHPRYSRAVVDYDISIVELSEDISETGYVRPVCLPNPEQWLEPDTYCYITGWGHMGNKMPFKLQEGEVRIISLEHCQSYFDMKTITTRMICAGYESGTVDSCMGDSGGPLVCEKPGGRWTLFGLTSWGSVCFSKVLGPGVYSNVSYFVEWIKRQIYIQTFLLN.

A disordered region spans residues 1 to 25; that stretch reads MKQSPALAPEERCRRAGSPKPVLRA. Residues 1 to 45 are Cytoplasmic-facing; that stretch reads MKQSPALAPEERCRRAGSPKPVLRADDNNMGNGCSQKLATANLLR. The DDNN motif signature appears at 26 to 29; sequence DDNN. Residues 46–66 traverse the membrane as a helical; Signal-anchor for type II membrane protein segment; the sequence is FLLLVLIPCICALVLLLVILL. At 67-1042 the chain is on the extracellular side; sequence SYVGTLQKVY…QIYIQTFLLN (976 aa). N-linked (GlcNAc...) asparagine glycans are attached at residues N80, N104, N135, and N141. Residues 134–259 enclose the FZ 1 domain; sequence RNTSACMNIT…SNVSRICFSP (126 aa). Disulfide bonds link C139-C199, C147-C192, C183-C223, C212-C256, C216-C240, C269-C282, C277-C295, and C289-C304. Residues N231, N245, and N251 are each glycosylated (N-linked (GlcNAc...) asparagine). 4 consecutive LDL-receptor class A domains span residues 268–304, 305–340, 341–377, and 378–415; these read LCGR…EAHC, NCSE…EQNC, DCNP…EVNC, and SCHS…ENCS. The N-linked (GlcNAc...) asparagine glycan is linked to N305. 9 disulfides stabilise this stretch: C306/C318, C313/C331, C325/C340, C342/C355, C350/C368, C362/C377, C379/C392, C387/C405, and C399/C414. N-linked (GlcNAc...) asparagine glycosylation occurs at N320. An N-linked (GlcNAc...) asparagine glycan is attached at N376. N-linked (GlcNAc...) asparagine glycosylation is found at N413, N446, N451, and N469. One can recognise an FZ 2 domain in the interval 450–573; the sequence is NNCSQCEPIT…NSDNQTCLMP (124 aa). Intrachain disulfides connect C455–C518, C463–C511, C502–C540, C529–C570, C533–C557, C580–C592, C587–C605, C599–C614, C616–C630, C624–C643, C637–C652, C655–C667, C662–C680, and C674–C689. N-linked (GlcNAc...) asparagine glycosylation is present at N567. 3 consecutive LDL-receptor class A domains span residues 579-614, 615-653, and 654-689; these read ECSP…EENC, GCKE…KNCS, and FCQD…EWDC. A glycan (N-linked (GlcNAc...) asparagine) is linked at N651. One can recognise an SRCR domain in the interval 690–801; the sequence is VTLSINVNSS…RRPAARMNKR (112 aa). N697 and N761 each carry an N-linked (GlcNAc...) asparagine glycan. Disulfide bonds link C790–C912, C828–C844, C926–C991, C955–C970, and C981–C1010. The 234-residue stretch at 802–1035 folds into the Peptidase S1 domain; the sequence is ILGGRTSRPG…FVEWIKRQIY (234 aa). Catalysis depends on charge relay system residues H843 and D892. Catalysis depends on S985, which acts as the Charge relay system. Residue N1022 is glycosylated (N-linked (GlcNAc...) asparagine).

It belongs to the peptidase S1 family. In terms of processing, N-glycosylated; required for processing and activation. Activated through proteolytic processing by a trypsin-like protease; cleaved into a N-terminal propeptide and an activated corin protease fragment. Different soluble forms are produced by cleavage and autocatalytic cleavage: Atrial natriuretic peptide-converting enzyme, 180 kDa soluble fragment is produced by cleavage by ADAM10, while 160 kDa and 100 kDa soluble fragments are produced by autocatalytic cleavage. Cleavage by ADAM10 to produce soluble 180 kDa soluble fragment takes place after the transmembrane region and before FZ 1. Post-translationally, a disulfide bond links the activated corin protease fragment and the N-terminal propeptide. The disulfide bond also links the activated corin protease fragment with soluble fragments (100 kDa, 160 kDa and 180 kDa fragments). In terms of tissue distribution, highly expressed in heart. Expressed in heart myocytes. Also expressed in pregnant uterus. Detected in blood, in plasma as well as in serum (at protein level).

Its subcellular location is the cell membrane. The protein localises to the secreted. With respect to regulation, inhibited in a dose-dependent manner by non-specific trypsin-like serine protease inhibitors including benzamidine. Serine-type endopeptidase involved in atrial natriuretic peptide (NPPA) and brain natriuretic peptide (NPPB) processing. Converts through proteolytic cleavage the non-functional propeptides NPPA and NPPB into their active hormones, ANP and BNP(1-32) respectively, thereby regulating blood pressure in the heart and promoting natriuresis, diuresis and vasodilation. Proteolytic cleavage of pro-NPPA also plays a role in female pregnancy by promoting trophoblast invasion and spiral artery remodeling in uterus. Also acts as a regulator of sodium reabsorption in kidney. Functionally, has weaker endopeptidase activity compared to isoform 1. In Homo sapiens (Human), this protein is Atrial natriuretic peptide-converting enzyme (CORIN).